Here is a 758-residue protein sequence, read N- to C-terminus: Solute carrier family 26 member 6 (758 aa).

The Cytoplasmic portion of the chain corresponds to 1-117 (MGLPDGSDQG…PQGLAYALLA (117 aa)). A helical membrane pass occupies residues 118 to 138 (GLPPMFGLYSSFYPVFIYFLF). The Extracellular portion of the chain corresponds to 139 to 187 (GTSRHISVGTFAVMSVMVGSVTESLTADKAFVQGLNATADDARVQVAYT). Asparagine 174 carries N-linked (GlcNAc) asparagine glycosylation. Residues 188–208 (LSFLVGLFQVGLGLVHFGFVV) form a helical membrane-spanning segment. Residues 209–263 (TYLSEPLVRSYTTAASVQVLVSQLKYVFGIKLSSHSGPLSVIYTVLEVCAQLPET) lie on the Cytoplasmic side of the membrane. The helical transmembrane segment at 264 to 284 (VPGTVVTAIVAGVALVLVKLL) threads the bilayer. Over 285 to 292 (NEKLHRRL) the chain is Extracellular. A helical membrane pass occupies residues 293 to 313 (PLPIPGELLTLIGATGISYGV). Residues 314 to 340 (KLNDRFKVDVVGNITTGLIPPVAPKTE) lie on the Cytoplasmic side of the membrane. A helical transmembrane segment spans residues 341–361 (LFATLVGNAFAIAVVGFAIAI). Residues 362–380 (SLGKIFALRHGYRVDSNQE) lie on the Extracellular side of the membrane. Residues 381–401 (LVALGLSNLIGGFFQCFPVSC) traverse the membrane as a helical segment. Residues 402–417 (SMSRSLVQESTGGNTQ) are Cytoplasmic-facing. The chain crosses the membrane as a helical span at residues 418–438 (VAGAVSSLFILLIIVKLGELF). The Extracellular portion of the chain corresponds to 439–485 (RDLPKAVLAAVIIVNLKGMMKQFSDICSLWKANRVDLLIWLVTFVAT). A helical membrane pass occupies residues 486 to 506 (ILLNLDIGLAVSIVFSLLLVV). Residues 507-758 (VRMQLPHYSV…PKSPVLATKL (252 aa)) lie on the Cytoplasmic side of the membrane. The STAS domain maps to 531–741 (EYSGAKEVPG…ASVHDAVTFA (211 aa)). Residues 585-608 (EMKLKRMKKAKKSQKQDASSKISS) form a disordered region. Serine 751 is subject to Phosphoserine.

Interacts (via C-terminal domain) with PDZK1 (via C-terminal PDZ domain); the interaction induces chloride and oxalate exchange transport. Interacts with CFTR, SLC26A3 and NHERF1. Interacts with AHCYL1; the interaction increases SLC26A6 activity. In terms of processing, N-glycosylated. Glycosylation at Asn-174 positively regulates its chloride oxalate exchanger activity. In terms of tissue distribution, expressed in kidney (at protein level). Expressed in spermatogenic cells. Expressed in intestine, kidney, testis, brain, muscle, heart, and stomach. Expressed in the submandibular and sublingual salivary glands. Highly expressed in stomach, kidney, heart and small intestine, low in the lung, liver, testis, brain, skeletal muscle and colon. As to expression, expressed in the heart.

The protein localises to the cell membrane. The protein resides in the apical cell membrane. It localises to the cytoplasmic vesicle membrane. Its subcellular location is the microsome. It carries out the reaction 2 hydrogencarbonate(in) + chloride(out) = 2 hydrogencarbonate(out) + chloride(in). It catalyses the reaction oxalate(in) + chloride(out) = oxalate(out) + chloride(in). The catalysed reaction is oxalate(in) + formate(out) = oxalate(out) + formate(in). The enzyme catalyses oxalate(in) + sulfate(out) = oxalate(out) + sulfate(in). It carries out the reaction formate(in) + chloride(out) = formate(out) + chloride(in). It catalyses the reaction sulfate(in) = sulfate(out). With respect to regulation, apical membrane chloride-bicarbonate exchange activity of the pancreatic duct is inhibited by 4,4'-diisothiocyanatostilbene-2,2'-disulfonic acid (DIDS). Oxalate secretion in the duodenum and chloride-formate exchange activity is inhibited by DIDS. Chloride-formate exchange activity and transcellular sulfate absorption is inhibited by 4,4'-diisothiocyanatostilbene-2,2'-disulfonic acid (DIDS). Apical membrane anion-exchanger with wide epithelial distribution that plays a role as a component of the pH buffering system for maintaining acid-base homeostasis. Acts as a versatile DIDS-sensitive inorganic and organic anion transporter that mediates the uptake of monovalent anions like chloride, bicarbonate, formate and hydroxyl ion and divalent anions like sulfate and oxalate. Functions in multiple exchange modes involving pairs of these anions, which include chloride-bicarbonate, chloride-oxalate, oxalate-formate, oxalate-sulfate and chloride-formate exchange. Apical membrane chloride-bicarbonate exchanger that mediates luminal chloride absorption and bicarbonate secretion by the small intestinal brush border membrane and contributes to intracellular pH regulation in the duodenal upper villous epithelium during proton-coupled peptide absorption, possibly by providing a bicarbonate import pathway. Its association with carbonic anhydrase CA2 forms a bicarbonate transport metabolon; hence maximizes the local concentration of bicarbonate at the transporter site. Also mediates intestinal chloride absorption and oxalate secretion, thereby preventing hyperoxaluria and calcium oxalate urolithiasis. Transepithelial oxalate secretion, chloride-formate, chloride-oxalate and chloride-bicarbonate transport activities in the duodenum are inhibited by PKC activation in a calcium-independent manner. The apical membrane chloride-bicarbonate exchanger also provides a major route for fluid and bicarbonate secretion into the proximal tubules of the kidney as well as into the proximal part of the interlobular pancreatic ductal tree, where it mediates electrogenic chloride-bicarbonate exchange with a chloride-bicarbonate stoichiometry of 1:2, and hence will dilute and alkalinize protein-rich acinar secretion. Also mediates the transcellular sulfate absorption and oxalate secretion across the apical membrane in the duodenum and the formate ion efflux at the apical brush border of cells in the proximal tubules of kidney. Plays a role in sperm capacitation by increasing intracellular pH. Functionally, mediates electrogenic chloride-bicarbonate exchange with a chloride-bicarbonate stoichiometry of 1:2. Also mediates exchange of chloride-formate and chloride-oxalate ions. Mediates transcellular sulfate absorption. The sequence is that of Solute carrier family 26 member 6 from Mus musculus (Mouse).